The primary structure comprises 390 residues: Phosphopentomutase (390 aa).

D12, D285, H290, D326, H327, and H338 together coordinate Mn(2+).

Belongs to the phosphopentomutase family. Mn(2+) serves as cofactor.

It is found in the cytoplasm. The enzyme catalyses 2-deoxy-alpha-D-ribose 1-phosphate = 2-deoxy-D-ribose 5-phosphate. It carries out the reaction alpha-D-ribose 1-phosphate = D-ribose 5-phosphate. The protein operates within carbohydrate degradation; 2-deoxy-D-ribose 1-phosphate degradation; D-glyceraldehyde 3-phosphate and acetaldehyde from 2-deoxy-alpha-D-ribose 1-phosphate: step 1/2. Isomerase that catalyzes the conversion of deoxy-ribose 1-phosphate (dRib-1-P) and ribose 1-phosphate (Rib-1-P) to deoxy-ribose 5-phosphate (dRib-5-P) and ribose 5-phosphate (Rib-5-P), respectively. In Brevibacillus brevis (strain 47 / JCM 6285 / NBRC 100599), this protein is Phosphopentomutase.